An 82-amino-acid polypeptide reads, in one-letter code: Small ribosomal subunit protein eS27A (82 aa).

Residues 37 to 59 (CPGCLNITTVFSHAQTAVTCESC) form a C4-type zinc finger. The residue at position 40 (C40) is an S-methylcysteine.

The protein belongs to the eukaryotic ribosomal protein eS27 family. As to quaternary structure, component of the small ribosomal subunit (SSU). Mature yeast ribosomes consist of a small (40S) and a large (60S) subunit. The 40S small subunit contains 1 molecule of ribosomal RNA (18S rRNA) and 33 different proteins (encoded by 57 genes). The large 60S subunit contains 3 rRNA molecules (25S, 5.8S and 5S rRNA) and 46 different proteins (encoded by 81 genes). Zn(2+) serves as cofactor. The N-terminus is not modified.

The protein resides in the cytoplasm. Functionally, component of the ribosome, a large ribonucleoprotein complex responsible for the synthesis of proteins in the cell. The small ribosomal subunit (SSU) binds messenger RNAs (mRNAs) and translates the encoded message by selecting cognate aminoacyl-transfer RNA (tRNA) molecules. The large subunit (LSU) contains the ribosomal catalytic site termed the peptidyl transferase center (PTC), which catalyzes the formation of peptide bonds, thereby polymerizing the amino acids delivered by tRNAs into a polypeptide chain. The nascent polypeptides leave the ribosome through a tunnel in the LSU and interact with protein factors that function in enzymatic processing, targeting, and the membrane insertion of nascent chains at the exit of the ribosomal tunnel. The chain is Small ribosomal subunit protein eS27A from Saccharomyces cerevisiae (strain ATCC 204508 / S288c) (Baker's yeast).